The following is a 308-amino-acid chain: Probable 5-dehydro-4-deoxyglucarate dehydratase (308 aa).

Belongs to the DapA family.

It carries out the reaction 5-dehydro-4-deoxy-D-glucarate + H(+) = 2,5-dioxopentanoate + CO2 + H2O. It functions in the pathway carbohydrate acid metabolism; D-glucarate degradation; 2,5-dioxopentanoate from D-glucarate: step 2/2. In Bacillus subtilis (strain 168), this protein is Probable 5-dehydro-4-deoxyglucarate dehydratase (ycbC).